The chain runs to 398 residues: Nematocin receptor 2 (398 aa).

Over Met1 to Val25 the chain is Extracellular. Residues Asn3 and Asn7 are each glycosylated (N-linked (GlcNAc...) asparagine). Residues Tyr26 to Phe46 form a helical membrane-spanning segment. At Arg47–Pro58 the chain is on the cytoplasmic side. The helical transmembrane segment at Val59–Gly79 threads the bilayer. Residues Thr80–Lys99 lie on the Extracellular side of the membrane. A disulfide bond links Cys98 and Cys173. Residues Leu100–Ser120 form a helical membrane-spanning segment. At Ala121–Asn143 the chain is on the cytoplasmic side. The helical transmembrane segment at Trp144–Trp164 threads the bilayer. The Extracellular portion of the chain corresponds to Thr165–Thr187. Residues Tyr188–Tyr208 traverse the membrane as a helical segment. Topologically, residues Tyr209–Leu271 are cytoplasmic. Residues Thr272 to Ile292 traverse the membrane as a helical segment. Over Gln293 to Ile302 the chain is Extracellular. A helical membrane pass occupies residues Met303–Leu325. Over Phe326–Asn398 the chain is Cytoplasmic.

This sequence belongs to the G-protein coupled receptor 1 family. Vasopressin/oxytocin receptor subfamily. In terms of tissue distribution, detected in the ADL sensory neurons, the RMED and RMEV motor neurons, and the PQR tail neuron. In males, detected in SPC tail neurons involved in spicule penetration and sperm transfer, and male-specific oblique muscles involved in vulval contact.

The protein resides in the cell membrane. Its function is as follows. Not directly activated by nematocin. May modulate activity of the nematocin receptor ntr-1, leading to reduced intracellular cAMP production. Plays a role in male mating behavior. In Caenorhabditis elegans, this protein is Nematocin receptor 2.